The following is a 202-amino-acid chain: 3-isopropylmalate dehydratase small subunit (202 aa).

It belongs to the LeuD family. LeuD type 1 subfamily. As to quaternary structure, heterodimer of LeuC and LeuD.

The catalysed reaction is (2R,3S)-3-isopropylmalate = (2S)-2-isopropylmalate. The protein operates within amino-acid biosynthesis; L-leucine biosynthesis; L-leucine from 3-methyl-2-oxobutanoate: step 2/4. Its function is as follows. Catalyzes the isomerization between 2-isopropylmalate and 3-isopropylmalate, via the formation of 2-isopropylmaleate. This Nocardia farcinica (strain IFM 10152) protein is 3-isopropylmalate dehydratase small subunit.